Reading from the N-terminus, the 421-residue chain is Histidine--tRNA ligase (421 aa).

The protein belongs to the class-II aminoacyl-tRNA synthetase family. As to quaternary structure, homodimer.

Its subcellular location is the cytoplasm. The enzyme catalyses tRNA(His) + L-histidine + ATP = L-histidyl-tRNA(His) + AMP + diphosphate + H(+). This Fervidobacterium nodosum (strain ATCC 35602 / DSM 5306 / Rt17-B1) protein is Histidine--tRNA ligase.